Here is a 151-residue protein sequence, read N- to C-terminus: Large ribosomal subunit protein bL9 (151 aa).

This sequence belongs to the bacterial ribosomal protein bL9 family.

Functionally, binds to the 23S rRNA. This is Large ribosomal subunit protein bL9 from Pelodictyon phaeoclathratiforme (strain DSM 5477 / BU-1).